The sequence spans 236 residues: Exotoxin type H (236 aa).

The first 32 residues, 1–32, serve as a signal peptide directing secretion; it reads MRYNCRYSHIDKKIYSMIICLSFLLYSNVVQA.

Belongs to the staphylococcal/streptococcal toxin family.

The protein localises to the secreted. In terms of biological role, mitogenic for human peripheral blood lymphocytes. In Streptococcus pyogenes serotype M1, this protein is Exotoxin type H (speH).